Reading from the N-terminus, the 280-residue chain is Beta-glucosyl-HMC-alpha-glucosyl-transferase (280 aa).

The protein operates within genetic information processing; DNA modification. Functionally, transfers a gentiobiosyl-group on a hydroxymethylcytosine residue in DNA. Is involved in a DNA modification process to protects the phage genome against its own nucleases and the host restriction endonuclease system. This is Beta-glucosyl-HMC-alpha-glucosyl-transferase from Enterobacteria phage T6 (Bacteriophage T6).